A 403-amino-acid chain; its full sequence is Probable tRNA sulfurtransferase (403 aa).

One can recognise a THUMP domain in the interval 60–165; that stretch reads KLAEERLKPI…KEGVFLSCRT (106 aa). Residues 183 to 184, 208 to 209, arginine 265, glycine 287, and glutamine 296 contribute to the ATP site; these read ML and HF.

Belongs to the ThiI family.

The protein localises to the cytoplasm. It catalyses the reaction [ThiI sulfur-carrier protein]-S-sulfanyl-L-cysteine + a uridine in tRNA + 2 reduced [2Fe-2S]-[ferredoxin] + ATP + H(+) = [ThiI sulfur-carrier protein]-L-cysteine + a 4-thiouridine in tRNA + 2 oxidized [2Fe-2S]-[ferredoxin] + AMP + diphosphate. The catalysed reaction is [ThiS sulfur-carrier protein]-C-terminal Gly-Gly-AMP + S-sulfanyl-L-cysteinyl-[cysteine desulfurase] + AH2 = [ThiS sulfur-carrier protein]-C-terminal-Gly-aminoethanethioate + L-cysteinyl-[cysteine desulfurase] + A + AMP + 2 H(+). It participates in cofactor biosynthesis; thiamine diphosphate biosynthesis. Functionally, catalyzes the ATP-dependent transfer of a sulfur to tRNA to produce 4-thiouridine in position 8 of tRNAs, which functions as a near-UV photosensor. Also catalyzes the transfer of sulfur to the sulfur carrier protein ThiS, forming ThiS-thiocarboxylate. This is a step in the synthesis of thiazole, in the thiamine biosynthesis pathway. The sulfur is donated as persulfide by IscS. In Listeria welshimeri serovar 6b (strain ATCC 35897 / DSM 20650 / CCUG 15529 / CIP 8149 / NCTC 11857 / SLCC 5334 / V8), this protein is Probable tRNA sulfurtransferase.